The chain runs to 122 residues: Large ribosomal subunit protein uL14 (122 aa).

It belongs to the universal ribosomal protein uL14 family. As to quaternary structure, part of the 50S ribosomal subunit. Forms a cluster with proteins L3 and L19. In the 70S ribosome, L14 and L19 interact and together make contacts with the 16S rRNA in bridges B5 and B8.

Its function is as follows. Binds to 23S rRNA. Forms part of two intersubunit bridges in the 70S ribosome. The polypeptide is Large ribosomal subunit protein uL14 (Chlorobaculum tepidum (strain ATCC 49652 / DSM 12025 / NBRC 103806 / TLS) (Chlorobium tepidum)).